The sequence spans 213 residues: MTDQSHQCVIIGIAGASASGKSLIASTLYRELREQVGDEHIGVIPEDSYYKDQSHLSMEERVKTNYDHPNAMDHSLLFQHLQALKRGSAIELPVYSYVEHTRMQETVRVEPKKVIILEGILLLTDARLREEMNFSIFVDTPLDICLMRRIKRDVNERGRSMDSVMAQYQKTVRPMFLQFIEPSKQYADIIVPRGGKNRIAIDILKAKISQFFE.

15-22 (GASASGKS) contributes to the ATP binding site.

This sequence belongs to the uridine kinase family.

Its subcellular location is the cytoplasm. The enzyme catalyses uridine + ATP = UMP + ADP + H(+). The catalysed reaction is cytidine + ATP = CMP + ADP + H(+). It participates in pyrimidine metabolism; CTP biosynthesis via salvage pathway; CTP from cytidine: step 1/3. It functions in the pathway pyrimidine metabolism; UMP biosynthesis via salvage pathway; UMP from uridine: step 1/1. In Salmonella agona (strain SL483), this protein is Uridine kinase.